The primary structure comprises 240 residues: Large ribosomal subunit protein uL2 (240 aa).

The span at 1 to 11 (MGKRLISQNRG) shows a compositional bias: polar residues. Disordered stretches follow at residues 1-26 (MGKR…KRKG) and 206-240 (GGGR…TGRK). 2 stretches are compositionally biased toward basic residues: residues 13–26 (GTPK…KRKG) and 228–240 (KVGH…TGRK).

It belongs to the universal ribosomal protein uL2 family. Part of the 50S ribosomal subunit. Forms a bridge to the 30S subunit in the 70S ribosome.

Functionally, one of the primary rRNA binding proteins. Required for association of the 30S and 50S subunits to form the 70S ribosome, for tRNA binding and peptide bond formation. It has been suggested to have peptidyltransferase activity; this is somewhat controversial. Makes several contacts with the 16S rRNA in the 70S ribosome. This is Large ribosomal subunit protein uL2 from Methanococcus vannielii (strain ATCC 35089 / DSM 1224 / JCM 13029 / OCM 148 / SB).